Consider the following 232-residue polypeptide: Large ribosomal subunit protein uL1 (232 aa).

This sequence belongs to the universal ribosomal protein uL1 family. Part of the 50S ribosomal subunit.

In terms of biological role, binds directly to 23S rRNA. The L1 stalk is quite mobile in the ribosome, and is involved in E site tRNA release. Its function is as follows. Protein L1 is also a translational repressor protein, it controls the translation of the L11 operon by binding to its mRNA. The polypeptide is Large ribosomal subunit protein uL1 (Bacillus velezensis (strain DSM 23117 / BGSC 10A6 / LMG 26770 / FZB42) (Bacillus amyloliquefaciens subsp. plantarum)).